The sequence spans 130 residues: Large ribosomal subunit protein bL17 (130 aa).

This sequence belongs to the bacterial ribosomal protein bL17 family. In terms of assembly, part of the 50S ribosomal subunit. Contacts protein L32.

This Paraburkholderia xenovorans (strain LB400) protein is Large ribosomal subunit protein bL17.